Reading from the N-terminus, the 857-residue chain is Autoinducer 2 sensor kinase/phosphatase LuxQ (857 aa).

A run of 2 helical transmembrane segments spans residues 14–34 (IASF…VSVL) and 283–303 (FWMA…RWWL). The 221-residue stretch at 486 to 706 (KMSHELRTPL…RFEIQLPIEL (221 aa)) folds into the Histidine kinase domain. Histidine 489 carries the phosphohistidine; by autocatalysis modification. Residues 731 to 846 (RVLLVEDNHT…TLHKALEHFK (116 aa)) form the Response regulatory domain. Residue aspartate 780 is modified to 4-aspartylphosphate.

As to quaternary structure, binds the complex formed by AI-2 and LuxP.

The protein localises to the cell inner membrane. It carries out the reaction ATP + protein L-histidine = ADP + protein N-phospho-L-histidine.. Its function is as follows. At low cell density, in absence of AI-2 (autoinducer 2), LuxQ has a kinase activity and autophosphorylates on a histidine residue. The phosphoryl group is then transferred to an aspartate residue in the response regulator domain. The phosphoryl group is transferred to LuxU, and ultimately to LuxO. At high cell density, in the presence of AI-2, the kinase activity is inactivated, and the response regulator domain has a phosphatase activity. This Vibrio cholerae serotype O1 (strain ATCC 39315 / El Tor Inaba N16961) protein is Autoinducer 2 sensor kinase/phosphatase LuxQ (luxQ).